A 131-amino-acid polypeptide reads, in one-letter code: Amicyanin (131 aa).

The N-terminal stretch at 1–26 is a signal peptide; sequence MISATKIRSCLAACVLAAFGATGALA. The 105-residue stretch at 27 to 131 folds into the Plastocyanin-like domain; that stretch reads DKATIPSESP…PFMRGKVVVE (105 aa). Cu cation contacts are provided by H79, C118, H121, and M124.

Cu cation serves as cofactor.

It localises to the periplasm. It participates in one-carbon metabolism; methylamine degradation. Functionally, primary acceptor of electrons from methylamine dehydrogenase. Passes those electrons on either a soluble cytochrome c or to pseudoazurin. The polypeptide is Amicyanin (mauC) (Paracoccus denitrificans).